Reading from the N-terminus, the 290-residue chain is Proteasome subunit beta (290 aa).

Positions 1-58 (MTTSGGLTGPGAFGRLPQPFHQPGITSFVEFLALQAPDLLPGRLQMPAGGQPPEVPHG) are cleaved as a propeptide — removed in mature form; by autocatalysis. T59 (nucleophile) is an active-site residue.

It belongs to the peptidase T1B family. As to quaternary structure, the 20S proteasome core is composed of 14 alpha and 14 beta subunits that assemble into four stacked heptameric rings, resulting in a barrel-shaped structure. The two inner rings, each composed of seven catalytic beta subunits, are sandwiched by two outer rings, each composed of seven alpha subunits. The catalytic chamber with the active sites is on the inside of the barrel. Has a gated structure, the ends of the cylinder being occluded by the N-termini of the alpha-subunits. Is capped by the proteasome-associated ATPase, ARC.

Its subcellular location is the cytoplasm. It carries out the reaction Cleavage of peptide bonds with very broad specificity.. Its pathway is protein degradation; proteasomal Pup-dependent pathway. With respect to regulation, the formation of the proteasomal ATPase ARC-20S proteasome complex, likely via the docking of the C-termini of ARC into the intersubunit pockets in the alpha-rings, may trigger opening of the gate for substrate entry. Interconversion between the open-gate and close-gate conformations leads to a dynamic regulation of the 20S proteasome proteolysis activity. Component of the proteasome core, a large protease complex with broad specificity involved in protein degradation. This chain is Proteasome subunit beta, found in Acidothermus cellulolyticus (strain ATCC 43068 / DSM 8971 / 11B).